We begin with the raw amino-acid sequence, 469 residues long: MTDRARLRLHDTAAGVVRDFVPLRPGHVSIYLCGATVQGLPHIGHVRSGVAFDILRRWLLARGYDVAFIRNVTDIEDKILAKAAAAGRPWWEWAATHERAFTAAYDALDVLPPSAEPRATGHITQMIEMIERLIQAGHAYTGGGDVYFDVLSYPEYGQLSGHKIDDVHQGEGVAAGKRDQRDFTLWKGEKPGEPSWPTPWGRGRPGWHLECSAMARSYLGPEFDIHCGGMDLVFPHHENEIAQSRAAGDGFARYWLHNGWVTMGGEKMSKSLGNVLSMPAMLQRVRPAELRYYLGSAHYRSMLEFSETAMQDAVKAYVGLEDFLHRVRTRVGAVCPGDPTPRFAEALDDDLSVPIALAEIHHVRAEGNRALDAGDHDGALRSASAIRAMMGILGCDPLDQRWESRDETSAALAAVDVLVQAELQNREKAREQRNWALADEIRGRLKRAGIEVTDTAEGPQWSLLGGDTK.

C33 serves as a coordination point for Zn(2+). The 'HIGH' region motif lies at 35 to 45; it reads ATVQGLPHIGH. Residues C211, H236, and E240 each coordinate Zn(2+). The 'KMSKS' region signature appears at 267-271; sequence KMSKS. Position 270 (K270) interacts with ATP.

Belongs to the class-I aminoacyl-tRNA synthetase family. As to quaternary structure, monomer. Requires Zn(2+) as cofactor.

Its subcellular location is the cytoplasm. The enzyme catalyses tRNA(Cys) + L-cysteine + ATP = L-cysteinyl-tRNA(Cys) + AMP + diphosphate. This is Cysteine--tRNA ligase (cysS) from Mycobacterium tuberculosis (strain CDC 1551 / Oshkosh).